The primary structure comprises 595 residues: Guanylate-binding protein 3 (595 aa).

The interval 1 to 309 (MAPEIHMTGP…NAISRGDLPC (309 aa)) is GTPase domain (Globular). Positions 35 to 276 (TQPVVVVAIV…FCSYIFSNSK (242 aa)) constitute a GB1/RHD3-type G domain. Residues 45–52 (GLYRTGKS), 67–69 (LGS), and 97–101 (DTEGL) contribute to the GTP site. A coiled-coil region spans residues 482-595 (EKEKEIEVEC…KRYMSHKLKI (114 aa)).

This sequence belongs to the TRAFAC class dynamin-like GTPase superfamily. GB1/RHD3 GTPase family. GB1 subfamily. As to quaternary structure, heterodimer with other family members, including GBP1, GBP2 and GBP5. Dimerization regulates subcellular location.

The protein resides in the cytoplasm. It is found in the perinuclear region. The protein localises to the golgi apparatus membrane. It carries out the reaction GTP + H2O = GDP + phosphate + H(+). Interferon (IFN)-inducible GTPase that plays important roles in innate immunity against a diverse range of bacterial, viral and protozoan pathogens. Hydrolyzes GTP very efficiently; GDP rather than GMP is the major reaction product. Following infection, recruited to the pathogen-containing vacuoles or vacuole-escaped bacteria and acts as a positive regulator of inflammasome assembly by promoting the release of inflammasome ligands from bacteria. Acts by promoting lysis of pathogen-containing vacuoles, releasing pathogens into the cytosol. Following pathogen release in the cytosol, promotes recruitment of proteins that mediate bacterial cytolysis: this liberates ligands that are detected by inflammasomes, such as lipopolysaccharide (LPS) that activates the non-canonical CASP4/CASP11 inflammasome or double-stranded DNA (dsDNA) that activates the AIM2 inflammasome. Exhibits antiviral activity against influenza virus. Functionally, shows the most prominent antiviral activity in epithelial cells. This is Guanylate-binding protein 3 (GBP3) from Homo sapiens (Human).